We begin with the raw amino-acid sequence, 364 residues long: Apelin receptor (364 aa).

Over 1–39 (MATDEFSSSTTPSYDYYDYTNESGLPPCDETDWDLSYSL) the chain is Extracellular. Asn21 carries an N-linked (GlcNAc...) asparagine glycan. Cystine bridges form between Cys28–Cys288 and Cys110–Cys187. The helical transmembrane segment at 40 to 60 (LPVFYMIVFVLGLSGNGVVIF) threads the bilayer. Over 61–78 (TVWKAKPKRRSADTYIGN) the chain is Cytoplasmic. A helical membrane pass occupies residues 79–99 (LALADLAFVVTLPLWATYTAL). Residues 100 to 112 (GFHWPFGSALCKL) are Extracellular-facing. Residues 113–133 (SSYLVLLNMFASVFCLTCLSF) form a helical membrane-spanning segment. Over 134-153 (DRYLAIVHSLSSAKLRSRSS) the chain is Cytoplasmic. A helical transmembrane segment spans residues 154–174 (ILVSLAVIWLFSGLLALPSLI). At 175–201 (LRDTRVEGNNTICDLDFSGVSSKENEN) the chain is on the extracellular side. N-linked (GlcNAc...) asparagine glycosylation is present at Asn183. The helical transmembrane segment at 202–222 (FWIGGLSILTTVPGFLLPLLL) threads the bilayer. Topologically, residues 223-250 (MTIFYCFIGGKVTMHFQNLKKEEQKKKR) are cytoplasmic. Residues 251–271 (LLKIIITLVVVFAICWLPFHI) form a helical membrane-spanning segment. The Extracellular portion of the chain corresponds to 272-298 (LKTIHFLDLMGFLELSCSTQNIIVSLH). Residues 299–319 (PYATCLAYINSCLNPFLYAFF) form a helical membrane-spanning segment. Over 320–364 (DLRFRSQCFFFFGFKKALQGHLSNTSSSLSAQTQKSEIHSLATKV) the chain is Cytoplasmic.

Belongs to the G-protein coupled receptor 1 family.

The protein resides in the cell membrane. Its function is as follows. G protein-coupled receptor for peptide hormones apelin (apln) and apelin receptor early endogenous ligand (apela), that plays a role in the regulation of normal cardiovascular function and fluid homeostasis. When acting as apelin receptor, activates both G(i) protein pathway that inhibits adenylate cyclase activity, and the beta-arrestin pathway that promotes internalization of the receptor. Also functions as mechanoreceptor that is activated by pathological stimuli in a G-protein-independent fashion to induce beta-arrestin signaling, hence eliciting cardiac hypertrophy. However, the presence of apelin ligand blunts cardiac hypertrophic induction from APLNR/APJ on response to pathological stimuli. Plays a key role in early development such as gastrulation, blood vessels formation and heart morphogenesis by acting as a receptor for apela hormone, promoting endoderm and mesendoderm cell migration and regulating the migration of cells fated to become myocardial progenitors, respectively. Promotes angioblast migration toward the embryonic midline, i.e. the position of the future vessel formation, during vasculogenesis. May promote sinus venosus (SV)-derived endothelial cells migration into the developing heart to promote coronary blood vessel development. Required for cardiovascular development, particularly for intersomitic vein angiogenesis. Plays also a role in various processes in adults such as regulation of blood vessel formation, blood pressure, heart contractility, and heart failure. Acts upstream of the i/o type of G-alpha proteins in the differentiation of endothelium, erythroid cells, myeloid cells and cardiomyocytes. The chain is Apelin receptor (aplnr) from Xenopus tropicalis (Western clawed frog).